Reading from the N-terminus, the 364-residue chain is MGISELEYLPQTTVNALLQYDNVRLATFRGYEYATDQWKKYLSDTKFFKVGEVDQIQCVFCRMKTSIRNEERIKKHVADCREGVVSAPQQQPPPPPSTSIGAVGGDPRPEDMNVPERGWDPPMSKDPKSTFLGKWPHSEYISIDSMVAEGFEFIGPGDRVQCRHCKVILRNWETTDIPSSEHERNAPRCPLVVQRYLTRMREDDERRDRELKEVQQRRKMDMNKAFSQDMSKLENRIASLKFWPGPIRDIEKVARTGFFYTGEKDMLTCYACACKLINWEKNDDPIKEHKINFPHCANMADVKWSDVGFSNDEECVICLGAKADTILKPCLHYSLCYGCSTQVQKCPLCRKKIEKRVQTTNVLQ.

The stretch at 24–89 (RLATFRGYEY…CREGVVSAPQ (66 aa)) is one BIR 1 repeat. Positions 83–126 (GVVSAPQQQPPPPPSTSIGAVGGDPRPEDMNVPERGWDPPMSKD) are disordered. The span at 117–126 (RGWDPPMSKD) shows a compositional bias: basic and acidic residues. 2 BIR repeats span residues 127 to 193 (PKST…PLVV) and 236 to 300 (RIAS…ANMA). The segment at 315–350 (CVICLGAKADTILKPCLHYSLCYGCSTQVQKCPLCR) adopts an RING-type zinc-finger fold.

Its function is as follows. May act as an apoptosis inhibitor. This is Putative apoptosis inhibitor ORF42 from Magallana gigas (Pacific oyster).